The following is a 426-amino-acid chain: Serine--tRNA ligase (426 aa).

Position 235–237 (235–237 (TAE)) interacts with L-serine. 266-268 (RRE) serves as a coordination point for ATP. Glu289 contributes to the L-serine binding site. An ATP-binding site is contributed by 353 to 356 (EISS). Position 389 (Ser389) interacts with L-serine.

This sequence belongs to the class-II aminoacyl-tRNA synthetase family. Type-1 seryl-tRNA synthetase subfamily. As to quaternary structure, homodimer. The tRNA molecule binds across the dimer.

The protein resides in the cytoplasm. The enzyme catalyses tRNA(Ser) + L-serine + ATP = L-seryl-tRNA(Ser) + AMP + diphosphate + H(+). It catalyses the reaction tRNA(Sec) + L-serine + ATP = L-seryl-tRNA(Sec) + AMP + diphosphate + H(+). The protein operates within aminoacyl-tRNA biosynthesis; selenocysteinyl-tRNA(Sec) biosynthesis; L-seryl-tRNA(Sec) from L-serine and tRNA(Sec): step 1/1. Functionally, catalyzes the attachment of serine to tRNA(Ser). Is also able to aminoacylate tRNA(Sec) with serine, to form the misacylated tRNA L-seryl-tRNA(Sec), which will be further converted into selenocysteinyl-tRNA(Sec). This chain is Serine--tRNA ligase, found in Trichormus variabilis (strain ATCC 29413 / PCC 7937) (Anabaena variabilis).